We begin with the raw amino-acid sequence, 469 residues long: ATP synthase subunit beta (469 aa).

156-163 (GGAGVGKT) serves as a coordination point for ATP.

The protein belongs to the ATPase alpha/beta chains family. In terms of assembly, F-type ATPases have 2 components, CF(1) - the catalytic core - and CF(0) - the membrane proton channel. CF(1) has five subunits: alpha(3), beta(3), gamma(1), delta(1), epsilon(1). CF(0) has three main subunits: a(1), b(2) and c(9-12). The alpha and beta chains form an alternating ring which encloses part of the gamma chain. CF(1) is attached to CF(0) by a central stalk formed by the gamma and epsilon chains, while a peripheral stalk is formed by the delta and b chains.

The protein resides in the cell membrane. It catalyses the reaction ATP + H2O + 4 H(+)(in) = ADP + phosphate + 5 H(+)(out). Produces ATP from ADP in the presence of a proton gradient across the membrane. The catalytic sites are hosted primarily by the beta subunits. The protein is ATP synthase subunit beta of Lactococcus lactis subsp. lactis (strain IL1403) (Streptococcus lactis).